The sequence spans 71 residues: MPIIKVRENEPFDVALRRFKRSCEKAGILADVRAREFYEKPTTARKRAKAAAIKRLAKKLSRENARRVRLY.

This sequence belongs to the bacterial ribosomal protein bS21 family.

This is Small ribosomal subunit protein bS21 from Shewanella piezotolerans (strain WP3 / JCM 13877).